Here is a 77-residue protein sequence, read N- to C-terminus: Large ribosomal subunit protein eL13 (77 aa).

Belongs to the eukaryotic ribosomal protein eL13 family.

The chain is Large ribosomal subunit protein eL13 from Sulfurisphaera tokodaii (strain DSM 16993 / JCM 10545 / NBRC 100140 / 7) (Sulfolobus tokodaii).